The primary structure comprises 229 residues: MIRCFAWTPLVGAPLITTVHFTSPPSLRIFASRSSAPSSSSSSSSTVAAASRRSISLSIIAVTSSVVSSFCFSSPALADFSEIPNSGGVKALDLRIGDGDVPIEGDQIEIHYYGRLAAKQGWRFDSTYDHKDSNGEAVPFTFVLGSSKVIPGIETAVRSMKVGGIRRVVIPPSQGYQNTSQEPLPPNFFDRQRLFTTIFNPTRLANGEGSTLGTLVFDIELVSTRRLHR.

Residues 1–63 (MIRCFAWTPL…SISLSIIAVT (63 aa)) constitute a chloroplast transit peptide. Residues 105–225 (GDQIEIHYYG…VFDIELVSTR (121 aa)) form the PPIase FKBP-type domain.

The protein belongs to the FKBP-type PPIase family.

The protein resides in the plastid. It is found in the chloroplast thylakoid lumen. It catalyses the reaction [protein]-peptidylproline (omega=180) = [protein]-peptidylproline (omega=0). PPIases accelerate the folding of proteins. It catalyzes the cis-trans isomerization of proline imidic peptide bonds in oligopeptides. This Arabidopsis thaliana (Mouse-ear cress) protein is Peptidyl-prolyl cis-trans isomerase FKBP17-1, chloroplastic (FKBP17-1).